We begin with the raw amino-acid sequence, 126 residues long: Large ribosomal subunit protein bL12 (126 aa).

Belongs to the bacterial ribosomal protein bL12 family. In terms of assembly, homodimer. Part of the ribosomal stalk of the 50S ribosomal subunit. Forms a multimeric L10(L12)X complex, where L10 forms an elongated spine to which 2 to 4 L12 dimers bind in a sequential fashion. Binds GTP-bound translation factors.

In terms of biological role, forms part of the ribosomal stalk which helps the ribosome interact with GTP-bound translation factors. Is thus essential for accurate translation. In Citrifermentans bemidjiense (strain ATCC BAA-1014 / DSM 16622 / JCM 12645 / Bem) (Geobacter bemidjiensis), this protein is Large ribosomal subunit protein bL12.